The primary structure comprises 336 residues: Adenylosuccinate synthetase (336 aa).

GTP is bound by residues 12–18 (GDEGKGK) and 42–44 (GHS). Asp13 functions as the Proton acceptor in the catalytic mechanism. Residues Asp13 and Gly42 each contribute to the Mg(2+) site. Residues 13–16 (DEGK), 40–43 (NAGH), Thr127, Arg141, Gln179, Thr194, and Arg256 contribute to the IMP site. His43 acts as the Proton donor in catalysis. 252 to 258 (TVTGRRR) is a binding site for substrate. GTP contacts are provided by residues Arg258, 284–286 (CLD), and 324–326 (STG).

The protein belongs to the adenylosuccinate synthetase family. As to quaternary structure, homodimer. The cofactor is Mg(2+).

The protein localises to the cytoplasm. The enzyme catalyses IMP + L-aspartate + GTP = N(6)-(1,2-dicarboxyethyl)-AMP + GDP + phosphate + 2 H(+). The protein operates within purine metabolism; AMP biosynthesis via de novo pathway; AMP from IMP: step 1/2. Its function is as follows. Plays an important role in the de novo pathway of purine nucleotide biosynthesis. Catalyzes the first committed step in the biosynthesis of AMP from IMP. This Methanococcus aeolicus (strain ATCC BAA-1280 / DSM 17508 / OCM 812 / Nankai-3) protein is Adenylosuccinate synthetase.